The chain runs to 454 residues: NADP-specific glutamate dehydrogenase 1 (454 aa).

S2 is modified (N-acetylserine). K110 is a catalytic residue. 174–203 (GVLTGKGLNWGGSLIRPEATGYGLVYYTQA) provides a ligand contact to NAD(+). Residues K325, K371, and K433 each participate in a glycyl lysine isopeptide (Lys-Gly) (interchain with G-Cter in ubiquitin) cross-link.

It belongs to the Glu/Leu/Phe/Val dehydrogenases family. In terms of assembly, homohexamer.

It catalyses the reaction L-glutamate + NADP(+) + H2O = 2-oxoglutarate + NH4(+) + NADPH + H(+). In terms of biological role, catalyzes the incorporation of an ammonium ion into alpha-ketoglutarate to form L-glutamate, the major route of assimilation of ammonia into an organic form in yeast. In Saccharomyces cerevisiae (strain ATCC 204508 / S288c) (Baker's yeast), this protein is NADP-specific glutamate dehydrogenase 1.